Here is a 386-residue protein sequence, read N- to C-terminus: Probable magnesium transporter NIPA5 (386 aa).

Residues 1–18 (MVYSSGSWRDAYKGMSSD) are Extracellular-facing. A helical membrane pass occupies residues 19 to 39 (NVKGLVLALSSSIFIGASFIV). The Cytoplasmic segment spans residues 40 to 61 (KKKGLKKAGASGLRAGSGGYSY). Helical transmembrane passes span 62–82 (LLEP…IANF) and 83–103 (AAYA…SIII). At 104–115 (SASLAHIILQEK) the chain is on the cytoplasmic side. A helical transmembrane segment spans residues 116 to 136 (LHTFGILGCALCIVGSVTIVL). Residues 137-157 (HAPQEQDIVSVLEVWNLATEP) are Extracellular-facing. The chain crosses the membrane as a helical span at residues 158-178 (AFLFYAAAVVGAAIVLIVQFI). Residues 179–189 (PLYGQSHVMVY) lie on the Cytoplasmic side of the membrane. A helical membrane pass occupies residues 190-210 (IGVCSLIGSLSVMSVKALGIA). At 211-220 (LKLTFSGTNQ) the chain is on the extracellular side. A helical transmembrane segment spans residues 221 to 241 (LGYPQTWVFTVIVLFCVITQM). Topologically, residues 242 to 255 (NYLNKALDTFNTAV) are cytoplasmic. Residues 256 to 276 (VSPIYYVMFTSLTILASVIMF) traverse the membrane as a helical segment. The Extracellular segment spans residues 277-283 (KDWDRQS). Residues 284–304 (GTQIMTELCGFVTILSGTFLL) traverse the membrane as a helical segment. Residues 305 to 386 (HTTTDMVDGE…LRRQESSLRS (82 aa)) are Cytoplasmic-facing. The segment at 352 to 386 (RQESAKSPRPARQNKQLEDDLEAVPLRRQESSLRS) is disordered. Positions 376 to 386 (PLRRQESSLRS) are enriched in basic and acidic residues.

The protein belongs to the NIPA (TC 2.A.7) family. As to quaternary structure, homodimer.

It is found in the cell membrane. The protein localises to the early endosome. Acts as a Mg(2+) transporter. Can also transport other divalent cations such as Fe(2+), Sr(2+), Ba(2+), Mn(2+) and Co(2+) but to a much less extent than Mg(2+). This is Probable magnesium transporter NIPA5 from Arabidopsis thaliana (Mouse-ear cress).